We begin with the raw amino-acid sequence, 190 residues long: NADH dehydrogenase [ubiquinone] iron-sulfur protein 3 (190 aa).

This sequence belongs to the complex I 30 kDa subunit family. As to quaternary structure, complex I is composed of about 45 different subunits. This is a component of the iron-sulfur (IP) fragment of the enzyme.

The protein localises to the mitochondrion inner membrane. The enzyme catalyses a ubiquinone + NADH + 5 H(+)(in) = a ubiquinol + NAD(+) + 4 H(+)(out). In terms of biological role, core subunit of the mitochondrial membrane respiratory chain NADH dehydrogenase (Complex I) that is believed to belong to the minimal assembly required for catalysis. Complex I functions in the transfer of electrons from NADH to the respiratory chain. The immediate electron acceptor for the enzyme is believed to be ubiquinone. This is NADH dehydrogenase [ubiquinone] iron-sulfur protein 3 (NAD9) from Solanum tuberosum (Potato).